Here is a 773-residue protein sequence, read N- to C-terminus: 4'-phosphopantetheine phosphatase (773 aa).

A2 carries the post-translational modification N-acetylalanine. A pantothenate kinase region spans residues 2-402 (AECRASGGGS…APELCPTQRA (401 aa)). Positions 196 and 199 each coordinate acetyl-CoA. Y320 is modified (3'-nitrotyrosine). The segment at 403–773 (RSGTFDLLEM…VIFKYEVPAE (371 aa)) is 4'-phosphopantetheine phosphatase. S404 carries the post-translational modification Phosphoserine. At T406 the chain carries Phosphothreonine. 3 residues coordinate Mn(2+): D623, N624, and D659. The short motif at 724–728 (EGMGR) is the Subfamily II EGMGR motif element.

In the N-terminal section; belongs to the type II pantothenate kinase family. The protein in the C-terminal section; belongs to the damage-control phosphatase family. Phosphopantetheine phosphatase (II) subfamily. Homodimer. Interacts with PKM. Requires Mn(2+) as cofactor. The cofactor is Ni(2+).

The protein resides in the cytoplasm. It catalyses the reaction (R)-4'-phosphopantetheine + H2O = (R)-pantetheine + phosphate. It carries out the reaction (R)-4'-phosphopantetheine sulfonate + H2O = (R)-pantetheine sulfonate + phosphate. The enzyme catalyses (R)-4'-phospho-S-sulfopantetheine + H2O = (R)-S-sulfopantetheine + phosphate. Its activity is regulated as follows. Activity is strongly promoted by Co(2+), Ni(2+), Mg(2+) and Mn(2+). Activity is inhibited by EDTA. Phosphatase which shows a preference for 4'-phosphopantetheine and its oxidatively damaged forms (sulfonate or S-sulfonate), providing strong indirect evidence that the phosphatase activity pre-empts damage in the coenzyme A (CoA) pathway. Hydrolyzing excess 4'-phosphopantetheine could constitute a directed overflow mechanism to prevent its oxidation to the S-sulfonate, sulfonate, or other forms. Hydrolyzing 4'-phosphopantetheine sulfonate or S-sulfonate would forestall their conversion to inactive forms of CoA and acyl carrier protein. May play a role in the physiological regulation of CoA intracellular levels. The chain is 4'-phosphopantetheine phosphatase from Rattus norvegicus (Rat).